A 20-amino-acid chain; its full sequence is Unknown protein NF040 from 2D-PAGE (20 aa).

A TCTP domain is found at 1 to 20 (MKVYTDIFTRDEFLSDSYPM).

It belongs to the TCTP family.

This is Unknown protein NF040 from 2D-PAGE from Naegleria fowleri (Brain eating amoeba).